The following is a 437-amino-acid chain: ATP-dependent RNA helicase RhlB (437 aa).

The short motif at 9 to 37 (KKFADFPLHKEVQQALNEVGFEFCTPIQA) is the Q motif element. Residues 40–219 (LPILLAKKDI…YDHMNEPEKV (180 aa)) enclose the Helicase ATP-binding domain. 53-60 (AQTGTGKT) provides a ligand contact to ATP. The DEAD box motif lies at 165 to 168 (DEAD). Residues 243 to 390 (KMPLLLSLLE…VTSYDSEALL (148 aa)) form the Helicase C-terminal domain. A disordered region spans residues 394-437 (PAPKRIHRKPSSHSRNSRDRSGSRPQGGHRGNAPRRHDKTRRHS). Over residues 425-437 (NAPRRHDKTRRHS) the composition is skewed to basic residues.

This sequence belongs to the DEAD box helicase family. RhlB subfamily. As to quaternary structure, component of the RNA degradosome, which is a multiprotein complex involved in RNA processing and mRNA degradation.

It localises to the cytoplasm. It catalyses the reaction ATP + H2O = ADP + phosphate + H(+). In terms of biological role, DEAD-box RNA helicase involved in RNA degradation. Has RNA-dependent ATPase activity and unwinds double-stranded RNA. The polypeptide is ATP-dependent RNA helicase RhlB (Shewanella piezotolerans (strain WP3 / JCM 13877)).